A 971-amino-acid chain; its full sequence is Unconventional myosin-XIX (971 aa).

The tract at residues 1 to 25 (MSRPLSKNTEREPKQINGHQNNLSN) is disordered. A Myosin motor domain is found at 48–755 (HLYDDLTKVN…MVELLEERRL (708 aa)). ATP is bound at residue 145–152 (GESGAGKT). The segment at 611-633 (LESLMQILHSTTPHYIRCIKPNV) is actin-binding. IQ domains are found at residues 758-787 (ISSKAMCIQCCWRSYRQRKLAKQSKAATTI) and 780-809 (QSKAATTIQAAVKGWLTKKYIKRMHSAATV). Positions 826 to 971 (AAELDDSTED…FNEILLEKTV (146 aa)) are myMOMA region.

This sequence belongs to the TRAFAC class myosin-kinesin ATPase superfamily. Myosin family. As to quaternary structure, myosin is a hexamer of 2 heavy chains and 4 light chains.

Its subcellular location is the mitochondrion outer membrane. It is found in the cytoplasm. It localises to the cytoskeleton. Actin-based motor molecule with ATPase activity that localizes to the mitochondrion outer membrane. Motor protein that moves towards the plus-end of actin filaments. Required for mitochondrial inheritance during mitosis. May be involved in mitochondrial transport or positioning. This Xenopus laevis (African clawed frog) protein is Unconventional myosin-XIX.